We begin with the raw amino-acid sequence, 192 residues long: Dynein axonemal light chain 1 (192 aa).

LRR repeat units follow at residues 49-70 (NCER…NGLK), 71-92 (NLKI…EAVG), 94-115 (TLEE…HVMK), and 116-137 (KLKV…LKLA). Positions 150–192 (NPLEEKYSADGNWIEEATKRLPKLKKLDGNPVIKQEEETEGES) constitute an LRRCT domain.

Belongs to the dynein light chain LC1-type family. As to quaternary structure, interacts with DNAH5, a outer arm dynein heavy chain. Interacts with tubulin located within the A-tubule of the outer doublets in a ATP-independent manner.

The protein resides in the cytoplasm. The protein localises to the cytoskeleton. It is found in the cilium axoneme. In terms of biological role, part of the multisubunit axonemal ATPase complexes that generate the force for cilia motility and govern beat frequency. Component of the outer arm dynein (ODA). May be involved in a mechanosensory feedback mechanism controlling ODA activity based on external conformational cues by tethering the outer arm dynein heavy chain (DNAH5) to the microtubule within the axoneme. The protein is Dynein axonemal light chain 1 (dnal1) of Danio rerio (Zebrafish).